Here is a 1053-residue protein sequence, read N- to C-terminus: Probable dihydropyrimidine dehydrogenase [NADP(+)] (1053 aa).

Residues 84–115 (ERGALKEAMRCLKCADAPCQKSCPTQLDIKSF) enclose the 4Fe-4S ferredoxin-type 1 domain. Residues C94, C97, C102, C106, C145, C151, C155, and Q171 each contribute to the [4Fe-4S] cluster site. FAD contacts are provided by residues 207–211 (GCGPA), 231–239 (EKRAYIGGL), R248, and L274. NADP(+)-binding positions include 354–357 (AGDT), 378–379 (RK), R385, 451–453 (AFG), and 495–501 (DVAGVAE). 494–503 (GDVAGVAETT) contacts FAD. FMN contacts are provided by residues S574 and 598–599 (KT). Substrate-binding positions include N633 and 692 to 694 (NLS). Residue C695 is the Proton acceptor of the active site. K733 serves as a coordination point for FMN. Substrate is bound at residue 760–761 (NT). Residues G791, 817-819 (TGG), and 840-841 (CS) each bind FMN. 2 4Fe-4S ferredoxin-type domains span residues 949–981 (EVAIIDHDMCINCGKCYMTCNDSGYQAITFDAV) and 983–1013 (HQPHVTEDDCTGCTLCYSVCPIPECIQMVPR). [4Fe-4S] cluster contacts are provided by C958, C961, C964, C968, C992, C995, C998, and C1002.

The protein belongs to the dihydropyrimidine dehydrogenase family. The cofactor is [4Fe-4S] cluster. FAD serves as cofactor. FMN is required as a cofactor.

It carries out the reaction 5,6-dihydrouracil + NADP(+) = uracil + NADPH + H(+). Its pathway is amino-acid biosynthesis; beta-alanine biosynthesis. Functionally, involved in pyrimidine base degradation. Catalyzes the reduction of uracil and thymine. Also involved the degradation of the chemotherapeutic drug 5-fluorouracil. This chain is Probable dihydropyrimidine dehydrogenase [NADP(+)], found in Caenorhabditis briggsae.